We begin with the raw amino-acid sequence, 109 residues long: MKRIKSGDEVIVIAGKSKGHIGKVLRVIDDAVVVEGGNLIKKHIKPNPQKPENKGGIITREAPLHVSNVAHYNPVTKKADKVGFKYLESNGVSKKVRYYKSNNEIIDRI.

The protein belongs to the universal ribosomal protein uL24 family. Part of the 50S ribosomal subunit.

One of two assembly initiator proteins, it binds directly to the 5'-end of the 23S rRNA, where it nucleates assembly of the 50S subunit. In terms of biological role, one of the proteins that surrounds the polypeptide exit tunnel on the outside of the subunit. In Legionella pneumophila (strain Corby), this protein is Large ribosomal subunit protein uL24.